Here is a 402-residue protein sequence, read N- to C-terminus: Enoyl-[acyl-carrier-protein] reductase [NADH] (402 aa).

Residues 48–53 (GASSGY), 74–75 (FE), 111–112 (DA), and 140–141 (LA) each bind NAD(+). Residue Y226 coordinates substrate. The Proton donor role is filled by Y236. NAD(+) contacts are provided by residues K245 and 274–276 (VVT).

It belongs to the TER reductase family. As to quaternary structure, monomer.

It catalyses the reaction a 2,3-saturated acyl-[ACP] + NAD(+) = a (2E)-enoyl-[ACP] + NADH + H(+). It functions in the pathway lipid metabolism; fatty acid biosynthesis. In terms of biological role, involved in the final reduction of the elongation cycle of fatty acid synthesis (FAS II). Catalyzes the reduction of a carbon-carbon double bond in an enoyl moiety that is covalently linked to an acyl carrier protein (ACP). This Xanthomonas axonopodis pv. citri (strain 306) protein is Enoyl-[acyl-carrier-protein] reductase [NADH].